The primary structure comprises 171 residues: Peptide deformylase (171 aa).

Fe cation contacts are provided by C91 and H133. E134 is an active-site residue. Residue H137 coordinates Fe cation.

Belongs to the polypeptide deformylase family. The cofactor is Fe(2+).

It catalyses the reaction N-terminal N-formyl-L-methionyl-[peptide] + H2O = N-terminal L-methionyl-[peptide] + formate. Removes the formyl group from the N-terminal Met of newly synthesized proteins. Requires at least a dipeptide for an efficient rate of reaction. N-terminal L-methionine is a prerequisite for activity but the enzyme has broad specificity at other positions. The protein is Peptide deformylase of Edwardsiella ictaluri (strain 93-146).